Consider the following 765-residue polypeptide: FHF complex subunit HOOK interacting protein 2A (765 aa).

Disordered stretches follow at residues 193-236 and 532-561; these read TLKG…DHLS and TDIS…KNDG. Composition is skewed to polar residues over residues 196–208 and 535–550; these read GQDS…GQSR and SPEN…SSSP.

This sequence belongs to the FHIP family. Expressed in all tissues tested, highly expressed brain. In terms of tissue distribution, only detected at high levels in testis.

In terms of biological role, required for proper functioning of the nervous system. The chain is FHF complex subunit HOOK interacting protein 2A from Homo sapiens (Human).